Reading from the N-terminus, the 339-residue chain is NADP-dependent dehydrogenase M3 (339 aa).

NADP(+)-binding residues include serine 49, isoleucine 51, aspartate 93, tyrosine 206, lysine 210, isoleucine 240, and glutamine 244. Residue tyrosine 206 is the Proton acceptor of the active site. The active-site Lowers pKa of active site Tyr is lysine 210.

The protein belongs to the short-chain dehydrogenases/reductases (SDR) family. As to quaternary structure, homodimer.

The protein localises to the cytoplasm. The protein resides in the cytosol. Its pathway is secondary metabolite biosynthesis. In terms of biological role, NADP-dependent dehydrogenase; part of the gene cluster that mediates the biosynthesis of squalestatin S1 (SQS1, also known as zaragozic acid A), a heavily oxidized fungal polyketide that offers potent cholesterol lowering activity by targeting squalene synthase (SS). SQS1 is composed of a 2,8-dioxobicyclic[3.2.1]octane-3,4,5-tricarboxyclic acid core that is connected to two lipophilic polyketide arms. These initial steps feature the priming of an unusual benzoic acid starter unit onto the highly reducing polyketide synthase pks2, followed by oxaloacetate extension and product release to generate a tricarboxylic acid containing product. The phenylalanine ammonia lyase (PAL) M7 and the acyl-CoA ligase M9 are involved in transforming phenylalanine into benzoyl-CoA. The citrate synthase-like protein R3 is involved in connecting the C-alpha-carbons of the hexaketide chain and oxaloacetate to afford the tricarboxylic acid unit. The potential hydrolytic enzymes, M8 and M10, are in close proximity to pks2 and may participate in product release. On the other side, the tetraketide arm is synthesized by a the squalestatin tetraketide synthase pks1 and enzymatically esterified to the core in the last biosynthetic step, by the acetyltransferase M4. The biosynthesis of the tetraketide must involve 3 rounds of chain extension. After the first and second rounds methyl-transfer occurs, and in all rounds of extension the ketoreductase and dehydratase are active. The enoyl reductase and C-MeT of pks1 are not active in the final round of extension. The acetyltransferase M4 appears to have a broad substrate selectivity for its acyl CoA substrate, allowing the in vitro synthesis of novel squalestatins. The biosynthesis of SQS1 requires several oxidative steps likely performed by oxidoreductases M1, R1 and R2. Finally, in support of the identification of the cluster as being responsible for SQS1 production, the cluster contains a gene encoding a putative squalene synthase (SS) R6, suggesting a likely mechanism for self-resistance. The polypeptide is NADP-dependent dehydrogenase M3 (Phoma sp. (strain ATCC 20986 / MF5453)).